The sequence spans 328 residues: PDZ and LIM domain protein 1 (328 aa).

The residue at position 2 (T2) is an N-acetylthreonine. The 83-residue stretch at 3–85 (TLQIVLQGPG…NMTLTVARSE (83 aa)) folds into the PDZ domain. S90 and S130 each carry phosphoserine. Y144 is subject to Phosphotyrosine. The LIM zinc-binding domain maps to 257 to 316 (PMCDKCGTGIVGVFVKLRERHRHPECYVCTDCGTNLKQKGHFFVEDQIYCEKHARERVTP). The Zn(2+) site is built by C259, C262, H279, C282, C285, C288, C306, and H309. Position 315 is a phosphothreonine (T315). Position 320 is a phosphotyrosine (Y320).

As to quaternary structure, interacts with ACTN1, ACTN2 and ACTN4. Interacts with PDLIM4.

The protein localises to the cytoplasm. Its subcellular location is the cytoskeleton. It is found in the myofibril. It localises to the sarcomere. The protein resides in the z line. Cytoskeletal protein that may act as an adapter that brings other proteins (like kinases) to the cytoskeleton. Involved in assembly, disassembly and directioning of stress fibers in fibroblasts. Required for the localization of ACTN1 and PALLD to stress fibers. Required for cell migration and in maintaining cell polarity of fibroblasts. The protein is PDZ and LIM domain protein 1 (PDLIM1) of Bos taurus (Bovine).